The sequence spans 204 residues: MELSIATPQGAKGTVSVSEAAFGREFNQDLVHQAVVAFMAGARQGTKAQKNRAAVSGGGKKPWRQKGTGRARAGTIRSPLWRSGGVTFAAEPRDHSQKLNKKMYRAAIRCILSELARQERLVVVEEFDLDAPKTKDLVQKLAQFDLADVLIIGEDVSENLYLAARNLHKVDVRDVNGLDPVSLIRFDKVVVTVAALKKLEEVLV.

The segment at 49–72 (QKNRAAVSGGGKKPWRQKGTGRAR) is disordered.

Belongs to the universal ribosomal protein uL4 family. In terms of assembly, part of the 50S ribosomal subunit.

Its function is as follows. One of the primary rRNA binding proteins, this protein initially binds near the 5'-end of the 23S rRNA. It is important during the early stages of 50S assembly. It makes multiple contacts with different domains of the 23S rRNA in the assembled 50S subunit and ribosome. Forms part of the polypeptide exit tunnel. The protein is Large ribosomal subunit protein uL4 of Saccharophagus degradans (strain 2-40 / ATCC 43961 / DSM 17024).